The chain runs to 434 residues: Serine hydroxymethyltransferase (434 aa).

(6S)-5,6,7,8-tetrahydrofolate is bound by residues leucine 128 and 132-134; that span reads GHL. Lysine 237 carries the N6-(pyridoxal phosphate)lysine modification.

It belongs to the SHMT family. As to quaternary structure, homodimer. Pyridoxal 5'-phosphate is required as a cofactor.

It is found in the cytoplasm. The catalysed reaction is (6R)-5,10-methylene-5,6,7,8-tetrahydrofolate + glycine + H2O = (6S)-5,6,7,8-tetrahydrofolate + L-serine. It functions in the pathway one-carbon metabolism; tetrahydrofolate interconversion. It participates in amino-acid biosynthesis; glycine biosynthesis; glycine from L-serine: step 1/1. In terms of biological role, catalyzes the reversible interconversion of serine and glycine with tetrahydrofolate (THF) serving as the one-carbon carrier. This reaction serves as the major source of one-carbon groups required for the biosynthesis of purines, thymidylate, methionine, and other important biomolecules. Also exhibits THF-independent aldolase activity toward beta-hydroxyamino acids, producing glycine and aldehydes, via a retro-aldol mechanism. This is Serine hydroxymethyltransferase from Corynebacterium glutamicum (strain R).